The following is a 716-amino-acid chain: DNA ligase (716 aa).

Residues 42 to 46, 91 to 92, and Glu125 each bind NAD(+); these read DAEYD and SL. The active-site N6-AMP-lysine intermediate is the Lys127. The NAD(+) site is built by Arg148, Glu184, Lys300, and Lys324. Positions 429, 432, 447, and 453 each coordinate Zn(2+). A BRCT domain is found at 638-716; it reads TASSPIAGKI…EEAWLQLIEG (79 aa).

This sequence belongs to the NAD-dependent DNA ligase family. LigA subfamily. Requires Mg(2+) as cofactor. The cofactor is Mn(2+).

The catalysed reaction is NAD(+) + (deoxyribonucleotide)n-3'-hydroxyl + 5'-phospho-(deoxyribonucleotide)m = (deoxyribonucleotide)n+m + AMP + beta-nicotinamide D-nucleotide.. Functionally, DNA ligase that catalyzes the formation of phosphodiester linkages between 5'-phosphoryl and 3'-hydroxyl groups in double-stranded DNA using NAD as a coenzyme and as the energy source for the reaction. It is essential for DNA replication and repair of damaged DNA. This Bartonella henselae (strain ATCC 49882 / DSM 28221 / CCUG 30454 / Houston 1) (Rochalimaea henselae) protein is DNA ligase.